The primary structure comprises 355 residues: Anhydro-N-acetylmuramic acid kinase (355 aa).

Residue 9 to 16 (GTSLDGVD) coordinates ATP.

The protein belongs to the anhydro-N-acetylmuramic acid kinase family.

The catalysed reaction is 1,6-anhydro-N-acetyl-beta-muramate + ATP + H2O = N-acetyl-D-muramate 6-phosphate + ADP + H(+). It functions in the pathway amino-sugar metabolism; 1,6-anhydro-N-acetylmuramate degradation. Its pathway is cell wall biogenesis; peptidoglycan recycling. In terms of biological role, catalyzes the specific phosphorylation of 1,6-anhydro-N-acetylmuramic acid (anhMurNAc) with the simultaneous cleavage of the 1,6-anhydro ring, generating MurNAc-6-P. Is required for the utilization of anhMurNAc either imported from the medium or derived from its own cell wall murein, and thus plays a role in cell wall recycling. The protein is Anhydro-N-acetylmuramic acid kinase of Paramagnetospirillum magneticum (strain ATCC 700264 / AMB-1) (Magnetospirillum magneticum).